The chain runs to 138 residues: Small ribosomal subunit protein uS11c (138 aa).

Positions 1–23 (MAKAIPRVGSRKNGRISSRKSAR) are disordered. The segment covering 9-23 (GSRKNGRISSRKSAR) has biased composition (basic residues).

It belongs to the universal ribosomal protein uS11 family. As to quaternary structure, part of the 30S ribosomal subunit.

Its subcellular location is the plastid. It localises to the chloroplast. This Coffea arabica (Arabian coffee) protein is Small ribosomal subunit protein uS11c.